A 350-amino-acid chain; its full sequence is tRNA N6-adenosine threonylcarbamoyltransferase (350 aa).

Fe cation contacts are provided by His109 and His113. Substrate is bound by residues 136 to 140, Asp169, Gly182, Asp186, and Asn284; that span reads TVSGG. Position 312 (Asp312) interacts with Fe cation.

It belongs to the KAE1 / TsaD family. Requires Fe(2+) as cofactor.

The protein resides in the cytoplasm. It catalyses the reaction L-threonylcarbamoyladenylate + adenosine(37) in tRNA = N(6)-L-threonylcarbamoyladenosine(37) in tRNA + AMP + H(+). In terms of biological role, required for the formation of a threonylcarbamoyl group on adenosine at position 37 (t(6)A37) in tRNAs that read codons beginning with adenine. Is involved in the transfer of the threonylcarbamoyl moiety of threonylcarbamoyl-AMP (TC-AMP) to the N6 group of A37, together with TsaE and TsaB. TsaD likely plays a direct catalytic role in this reaction. In Pelodictyon phaeoclathratiforme (strain DSM 5477 / BU-1), this protein is tRNA N6-adenosine threonylcarbamoyltransferase.